A 303-amino-acid chain; its full sequence is Protoheme IX farnesyltransferase (303 aa).

The next 7 membrane-spanning stretches (helical) occupy residues 25–45 (MGLVQGNLIPAFAGSWLAIVL), 54–74 (IPQILMMLVGSTLIMGGACAL), 118–138 (LLFALNIPSGVIGLLGIVGYV), 151–171 (WNTVIGSFPGAVPPLIGWTAI), 177–197 (LVAVALFLVIFCWQPIHFYAL), 230–250 (LVVLLPLPFLLSSLGVTFIVL), and 280–300 (FIYSLNYLVVFFVLVVVISLI).

The protein belongs to the UbiA prenyltransferase family. Protoheme IX farnesyltransferase subfamily. In terms of assembly, interacts with CtaA.

It is found in the cell membrane. It catalyses the reaction heme b + (2E,6E)-farnesyl diphosphate + H2O = Fe(II)-heme o + diphosphate. Its pathway is porphyrin-containing compound metabolism; heme O biosynthesis; heme O from protoheme: step 1/1. Converts heme B (protoheme IX) to heme O by substitution of the vinyl group on carbon 2 of heme B porphyrin ring with a hydroxyethyl farnesyl side group. This is Protoheme IX farnesyltransferase from Staphylococcus saprophyticus subsp. saprophyticus (strain ATCC 15305 / DSM 20229 / NCIMB 8711 / NCTC 7292 / S-41).